The chain runs to 687 residues: MEELVGLREGASKKPVPLQELWGPCPRIRRNIQGGLEWLKERLFRVGEDWYFLVALGVLMALISYAMNFTIGRVVRAHKWLYREIGDGHLLRYLSWTVYPVALLSFSSGFSQSITPSSGGSGIPEVKTILTGVVLEDYLDIKNFGAKVVGLSCTLATGSTIFLGKLGPFVHLSVMIAAYLGRVRTKTVGEPESKTKEMELLAAGAAVGVATVFAAPISGVLFSIEVMSSHFSVWDYWRGFFAATCGAFMFHLLAVFNNEQETITSIYKTSFPVDIPFDLPEIFFFVALGAICGILSCGYNYSQRTFLFFLKANGFTSKLLATSKPLYSALAAVVLASITYPPGVGHFMASRLSMSEHLETLFDNNSWALMTKNSSPPWAAEPDPQKLWLEWCHPQLTVFGTLVFFLVMKFWMLILATTIPIPAGYFLPIFIYGAVIGRLFGEVLSVAFPEGIVAGGRVNPIMPGAYALAGAAAFSGAVTHTLSTALLAFEVTGQLVHALPVLMAVLAANAISQSFQPSFYDGTIIVKKLPYLPWIRGRQIGSHSVTVGHFMNCALTTLAKDMPLEQVIQVVISTDVTQYPLVETTESQTLVGVVKRTHLVQALQTEPASWAPGQQPCLQDILANGCPTQPVTLQLSLETSLHETHNLFELLNLQTLFVTSRGRAVGSVSWVELKKAISTLTNPPAPK.

Residues 1–50 (MEELVGLREGASKKPVPLQELWGPCPRIRRNIQGGLEWLKERLFRVGEDW) lie on the Cytoplasmic side of the membrane. 2 consecutive transmembrane segments (helical) span residues 51–82 (YFLVALGVLMALISYAMNFTIGRVVRAHKWLY) and 91–111 (LRYLSWTVYPVALLSFSSGFS). Residues 116–127 (PSSGGSGIPEVK) constitute an intramembrane region (helical). Ser121 serves as a coordination point for chloride. The next 2 membrane-spanning stretches (helical) occupy residues 141-160 (IKNFGAKVVGLSCTLATGST) and 161-180 (IFLGKLGPFVHLSVMIAAYL). The helical intramembrane region spans 203–224 (AGAAVGVATVFAAPISGVLFSI). Residues 236–255 (YWRGFFAATCGAFMFHLLAV) traverse the membrane as a helical segment. Ca(2+) is bound by residues Glu259, Glu261, Asp278, and Glu281. Transmembrane regions (helical) follow at residues 282–310 (IFFFVALGAICGILSCGYNYSQRTFLFFL) and 325–342 (PLYSALAAVVLASITYPP). Positions 349–360 (ASRLSMSEHLET) form an intramembrane region, helical. 2 helical membrane-spanning segments follow: residues 400–420 (GTLVFFLVMKFWMLILATTIP) and 421–440 (IPAGYFLPIFIYGAVIGRLF). Position 426 (Phe426) interacts with chloride. The segment at residues 464–496 (GAYALAGAAAFSGAVTHTLSTALLAFEVTGQLV) is an intramembrane region (helical). The chain crosses the membrane as a helical span at residues 500–520 (PVLMAVLAANAISQSFQPSFY). At 521–687 (DGTIIVKKLP…STLTNPPAPK (167 aa)) the chain is on the cytoplasmic side. CBS domains lie at 551-609 (MNCA…EPAS) and 626-687 (CPTQ…PAPK).

The protein belongs to the chloride channel (TC 2.A.49) family. CLCNKB subfamily. As to quaternary structure, homodimer. Interacts with BSND. N-glycosylated. Specifically expressed in the kidney, predominantly in the outer medulla and cortex. All nephron segments expressing BSND also express CLCNK proteins.

The protein resides in the basolateral cell membrane. The enzyme catalyses chloride(in) = chloride(out). It carries out the reaction iodide(out) = iodide(in). The catalysed reaction is nitrate(in) = nitrate(out). It catalyses the reaction bromide(in) = bromide(out). Functionally, anion-selective channel permeable to small monovalent anions with ion selectivity for chloride &gt; bromide &gt; nitrate &gt; iodide. Forms a homodimeric channel where each subunit has its own ion conduction pathway. May conduct double-barreled currents controlled by two types of gates, two fast gates that control each subunit independently and a slow common gate that opens and shuts off both subunits simultaneously. Assembles with the regulatory subunit BSND/Barttin for sorting at the basolateral plasma membrane domain and functional switch to the ion conducting state. CLCNKB:BSND channels display mostly a linear current-voltage relationship controlled by common gate. Mediates chloride conductance along nephron segments, namely the thick ascending limb of Henle's loop, convoluted tubule and the collecting duct, contributing to the maintenance of systemic acid-base and electrolyte homeostasis. Conducts chloride currents in the stria vascularis of the inner ear to establish the endocochlear potential necessary for normal hearing. The protein is Chloride channel protein ClC-Kb of Mus musculus (Mouse).